The chain runs to 489 residues: 3-octaprenyl-4-hydroxybenzoate carboxy-lyase (489 aa).

Residue Asn172 participates in Mn(2+) binding. Residues 175 to 177, 189 to 191, and 194 to 195 contribute to the prenylated FMN site; these read IYR, RWL, and RG. Glu238 lines the Mn(2+) pocket. Residue Asp287 is the Proton donor of the active site.

It belongs to the UbiD family. As to quaternary structure, homohexamer. It depends on prenylated FMN as a cofactor. Mn(2+) is required as a cofactor.

Its subcellular location is the cell membrane. The catalysed reaction is a 4-hydroxy-3-(all-trans-polyprenyl)benzoate + H(+) = a 2-(all-trans-polyprenyl)phenol + CO2. It functions in the pathway cofactor biosynthesis; ubiquinone biosynthesis. In terms of biological role, catalyzes the decarboxylation of 3-octaprenyl-4-hydroxy benzoate to 2-octaprenylphenol, an intermediate step in ubiquinone biosynthesis. The chain is 3-octaprenyl-4-hydroxybenzoate carboxy-lyase from Psychromonas ingrahamii (strain DSM 17664 / CCUG 51855 / 37).